The sequence spans 608 residues: Phosphogluconate dehydratase (608 aa).

2 residues coordinate [4Fe-4S] cluster: Cys154 and Cys221.

The protein belongs to the IlvD/Edd family. [4Fe-4S] cluster is required as a cofactor.

It catalyses the reaction 6-phospho-D-gluconate = 2-dehydro-3-deoxy-6-phospho-D-gluconate + H2O. It functions in the pathway carbohydrate metabolism; Entner-Doudoroff pathway. Functionally, catalyzes the dehydration of 6-phospho-D-gluconate to 2-dehydro-3-deoxy-6-phospho-D-gluconate. The polypeptide is Phosphogluconate dehydratase (Helicobacter pylori (strain J99 / ATCC 700824) (Campylobacter pylori J99)).